The chain runs to 420 residues: Dynein axonemal assembly factor 4 (420 aa).

The CS domain occupies 3–87 (LQVSDYSWQQ…KEAAMWETLS (85 aa)). Positions 7 to 103 (DYSWQQTKTA…EMMQRIREKS (97 aa)) are mediates interaction with ESR1 and STUB1. TPR repeat units lie at residues 290 to 323 (PEWL…NNKM), 324 to 357 (PLLY…LMPP), and 366 to 399 (MKAH…DPSN).

As to quaternary structure, interacts with ZMYND10. Interacts with STUB1. Interacts with ESR1 and ESR2. Interacts with DNAAF2. Interacts with CCT3, CCT4, CCT5 and CCT8. Interacts with DNAAF6/PIH1D3.

The protein localises to the nucleus. It localises to the cytoplasm. Its subcellular location is the cell projection. It is found in the neuron projection. The protein resides in the dynein axonemal particle. Functionally, involved in neuronal migration during development of the cerebral neocortex. May regulate the stability and proteasomal degradation of the estrogen receptors that play an important role in neuronal differentiation, survival and plasticity. Axonemal dynein assembly factor required for ciliary motility. This Pan paniscus (Pygmy chimpanzee) protein is Dynein axonemal assembly factor 4.